Consider the following 400-residue polypeptide: Elongation factor Tu (400 aa).

In terms of domain architecture, tr-type G spans 10–209; it reads KPHVNIGTIG…NVDAYIPTPE (200 aa). A G1 region spans residues 19-26; the sequence is GHVDHGKT. Position 19–26 (19–26) interacts with GTP; the sequence is GHVDHGKT. Thr26 provides a ligand contact to Mg(2+). The interval 60-64 is G2; sequence GITIN. The segment at 81–84 is G3; sequence DCPG. Residues 81–85 and 136–139 contribute to the GTP site; these read DCPGH and NKSD. The segment at 136-139 is G4; sequence NKSD. A G5 region spans residues 174 to 176; that stretch reads SGL.

Belongs to the TRAFAC class translation factor GTPase superfamily. Classic translation factor GTPase family. EF-Tu/EF-1A subfamily. In terms of assembly, monomer.

Its subcellular location is the cytoplasm. The catalysed reaction is GTP + H2O = GDP + phosphate + H(+). Functionally, GTP hydrolase that promotes the GTP-dependent binding of aminoacyl-tRNA to the A-site of ribosomes during protein biosynthesis. The polypeptide is Elongation factor Tu (Desulforamulus reducens (strain ATCC BAA-1160 / DSM 100696 / MI-1) (Desulfotomaculum reducens)).